A 349-amino-acid chain; its full sequence is GTP 3',8-cyclase (349 aa).

A Radical SAM core domain is found at 24-250 (PFGRAVTYLR…DIPYRTGGPA (227 aa)). Residue Arg-33 coordinates GTP. [4Fe-4S] cluster-binding residues include Cys-40 and Cys-44. Tyr-46 provides a ligand contact to S-adenosyl-L-methionine. Residue Cys-47 participates in [4Fe-4S] cluster binding. Residue Arg-82 participates in GTP binding. An S-adenosyl-L-methionine-binding site is contributed by Gly-86. Thr-116 contributes to the GTP binding site. Ser-140 contributes to the S-adenosyl-L-methionine binding site. Residue Lys-176 participates in GTP binding. Met-210 contributes to the S-adenosyl-L-methionine binding site. Residues Cys-273 and Cys-276 each contribute to the [4Fe-4S] cluster site. 278–280 (RVR) contributes to the GTP binding site. Residue Cys-290 participates in [4Fe-4S] cluster binding.

The protein belongs to the radical SAM superfamily. MoaA family. In terms of assembly, monomer and homodimer. [4Fe-4S] cluster serves as cofactor.

The enzyme catalyses GTP + AH2 + S-adenosyl-L-methionine = (8S)-3',8-cyclo-7,8-dihydroguanosine 5'-triphosphate + 5'-deoxyadenosine + L-methionine + A + H(+). Its pathway is cofactor biosynthesis; molybdopterin biosynthesis. In terms of biological role, catalyzes the cyclization of GTP to (8S)-3',8-cyclo-7,8-dihydroguanosine 5'-triphosphate. The polypeptide is GTP 3',8-cyclase (Rhizobium meliloti (strain 1021) (Ensifer meliloti)).